A 72-amino-acid polypeptide reads, in one-letter code: Conotoxin Ep11.1 (72 aa).

Residues 1-19 (MKLCVTFLLILVILPSVTG) form the signal peptide. A propeptide spanning residues 20–32 (EKSSKRTLSGAAL) is cleaved from the precursor. Intrachain disulfides connect cysteine 39–cysteine 53, cysteine 46–cysteine 58, cysteine 52–cysteine 63, and cysteine 57–cysteine 70.

Belongs to the conotoxin I1 superfamily. In terms of tissue distribution, expressed by the venom duct.

It is found in the secreted. In Conus episcopatus (Bishop's cone), this protein is Conotoxin Ep11.1.